The following is a 546-amino-acid chain: uncharacterized protein (546 aa).

This sequence belongs to the IIV-6 098R family.

This is an uncharacterized protein from Aedes vexans (Inland floodwater mosquito).